A 41-amino-acid polypeptide reads, in one-letter code: MPTRSTNPNKQPVELNRTSLFLGLLLVFVLGILSPATSLTS.

The chain crosses the membrane as a helical span at residues 20 to 40 (LFLGLLLVFVLGILSPATSLT).

It belongs to the PsbL family. In terms of assembly, PSII is composed of 1 copy each of membrane proteins PsbA, PsbB, PsbC, PsbD, PsbE, PsbF, PsbH, PsbI, PsbJ, PsbK, PsbL, PsbM, PsbT, PsbX, PsbY, PsbZ, Psb30/Ycf12, peripheral proteins PsbO, CyanoQ (PsbQ), PsbU, PsbV and a large number of cofactors. It forms dimeric complexes.

It localises to the cellular thylakoid membrane. In terms of biological role, one of the components of the core complex of photosystem II (PSII). PSII is a light-driven water:plastoquinone oxidoreductase that uses light energy to abstract electrons from H(2)O, generating O(2) and a proton gradient subsequently used for ATP formation. It consists of a core antenna complex that captures photons, and an electron transfer chain that converts photonic excitation into a charge separation. This subunit is found at the monomer-monomer interface and is required for correct PSII assembly and/or dimerization. In Synechococcus sp. (strain ATCC 27144 / PCC 6301 / SAUG 1402/1) (Anacystis nidulans), this protein is Photosystem II reaction center protein L.